Reading from the N-terminus, the 172-residue chain is Photosystem I assembly protein Ycf3 (172 aa).

TPR repeat units follow at residues 35 to 68 (AFSY…EVDA), 72 to 105 (SYIL…NPSL), and 120 to 153 (GEQA…APTN).

This sequence belongs to the Ycf3 family.

Its subcellular location is the plastid. The protein resides in the chloroplast thylakoid membrane. Its function is as follows. Essential for the assembly of the photosystem I (PSI) complex. May act as a chaperone-like factor to guide the assembly of the PSI subunits. This Chlamydomonas reinhardtii (Chlamydomonas smithii) protein is Photosystem I assembly protein Ycf3.